Here is a 102-residue protein sequence, read N- to C-terminus: Large ribosomal subunit protein uL24 (102 aa).

The protein belongs to the universal ribosomal protein uL24 family. As to quaternary structure, part of the 50S ribosomal subunit.

In terms of biological role, one of two assembly initiator proteins, it binds directly to the 5'-end of the 23S rRNA, where it nucleates assembly of the 50S subunit. One of the proteins that surrounds the polypeptide exit tunnel on the outside of the subunit. This chain is Large ribosomal subunit protein uL24, found in Burkholderia ambifaria (strain ATCC BAA-244 / DSM 16087 / CCUG 44356 / LMG 19182 / AMMD) (Burkholderia cepacia (strain AMMD)).